The sequence spans 488 residues: Probable glycine dehydrogenase (decarboxylating) subunit 2 (488 aa).

Lys273 is modified (N6-(pyridoxal phosphate)lysine).

This sequence belongs to the GcvP family. C-terminal subunit subfamily. The glycine cleavage system is composed of four proteins: P, T, L and H. In this organism, the P 'protein' is a heterodimer of two subunits. Pyridoxal 5'-phosphate serves as cofactor.

The enzyme catalyses N(6)-[(R)-lipoyl]-L-lysyl-[glycine-cleavage complex H protein] + glycine + H(+) = N(6)-[(R)-S(8)-aminomethyldihydrolipoyl]-L-lysyl-[glycine-cleavage complex H protein] + CO2. Functionally, the glycine cleavage system catalyzes the degradation of glycine. The P protein binds the alpha-amino group of glycine through its pyridoxal phosphate cofactor; CO(2) is released and the remaining methylamine moiety is then transferred to the lipoamide cofactor of the H protein. The polypeptide is Probable glycine dehydrogenase (decarboxylating) subunit 2 (Halalkalibacterium halodurans (strain ATCC BAA-125 / DSM 18197 / FERM 7344 / JCM 9153 / C-125) (Bacillus halodurans)).